We begin with the raw amino-acid sequence, 119 residues long: Ribosome-binding factor A (119 aa).

This sequence belongs to the RbfA family. In terms of assembly, monomer. Binds 30S ribosomal subunits, but not 50S ribosomal subunits or 70S ribosomes.

It is found in the cytoplasm. One of several proteins that assist in the late maturation steps of the functional core of the 30S ribosomal subunit. Associates with free 30S ribosomal subunits (but not with 30S subunits that are part of 70S ribosomes or polysomes). Required for efficient processing of 16S rRNA. May interact with the 5'-terminal helix region of 16S rRNA. In Citrifermentans bemidjiense (strain ATCC BAA-1014 / DSM 16622 / JCM 12645 / Bem) (Geobacter bemidjiensis), this protein is Ribosome-binding factor A.